Reading from the N-terminus, the 323-residue chain is tRNA dimethylallyltransferase (323 aa).

An ATP-binding site is contributed by 12–19 (GPTAAGKT). 14-19 (TAAGKT) serves as a coordination point for substrate. Interaction with substrate tRNA stretches follow at residues 37–40 (DSAL) and 161–165 (QRLMR).

This sequence belongs to the IPP transferase family. As to quaternary structure, monomer. Requires Mg(2+) as cofactor.

The enzyme catalyses adenosine(37) in tRNA + dimethylallyl diphosphate = N(6)-dimethylallyladenosine(37) in tRNA + diphosphate. Its function is as follows. Catalyzes the transfer of a dimethylallyl group onto the adenine at position 37 in tRNAs that read codons beginning with uridine, leading to the formation of N6-(dimethylallyl)adenosine (i(6)A). This chain is tRNA dimethylallyltransferase, found in Pseudomonas paraeruginosa (strain DSM 24068 / PA7) (Pseudomonas aeruginosa (strain PA7)).